The primary structure comprises 211 residues: Succinate dehydrogenase subunit 4, mitochondrial (211 aa).

Residues 1–36 (MASRLLARSKALALALSRADAAAPGPAAGVQWLRTL) constitute a mitochondrion transit peptide. Residues 41-64 (RDPAAAASPAPAPRQPAVGSPLGL) are disordered. H166 is a binding site for heme. An a ubiquinone-binding site is contributed by Y179. The helical transmembrane segment at 188–210 (WVFIYFKILLIIMAKETVVYFDL) threads the bilayer.

Component of complex II composed of eight subunits in plants: four classical SDH subunits SDH1, SDH2, SDH3 and SDH4 (a flavoprotein (FP), an iron-sulfur protein (IP), and a cytochrome b composed of a large and a small subunit.), as well as four subunits unknown in mitochondria from bacteria and heterotrophic eukaryotes. Heme is required as a cofactor.

The protein resides in the mitochondrion inner membrane. It functions in the pathway carbohydrate metabolism; tricarboxylic acid cycle. Membrane-anchoring subunit of succinate dehydrogenase (SDH). The chain is Succinate dehydrogenase subunit 4, mitochondrial from Oryza sativa subsp. japonica (Rice).